The primary structure comprises 169 residues: S-ribosylhomocysteine lyase (169 aa).

3 residues coordinate Fe cation: His54, His58, and Cys129.

This sequence belongs to the LuxS family. As to quaternary structure, homodimer. Fe cation is required as a cofactor.

The catalysed reaction is S-(5-deoxy-D-ribos-5-yl)-L-homocysteine = (S)-4,5-dihydroxypentane-2,3-dione + L-homocysteine. Involved in the synthesis of autoinducer 2 (AI-2) which is secreted by bacteria and is used to communicate both the cell density and the metabolic potential of the environment. The regulation of gene expression in response to changes in cell density is called quorum sensing. Catalyzes the transformation of S-ribosylhomocysteine (RHC) to homocysteine (HC) and 4,5-dihydroxy-2,3-pentadione (DPD). This is S-ribosylhomocysteine lyase from Glaesserella parasuis serovar 5 (strain SH0165) (Haemophilus parasuis).